The following is a 932-amino-acid chain: DNA mismatch repair protein MutS (932 aa).

615–622 (GPNMAGKS) serves as a coordination point for ATP.

It belongs to the DNA mismatch repair MutS family.

In terms of biological role, this protein is involved in the repair of mismatches in DNA. It is possible that it carries out the mismatch recognition step. This protein has a weak ATPase activity. The sequence is that of DNA mismatch repair protein MutS from Clostridium botulinum (strain Langeland / NCTC 10281 / Type F).